Reading from the N-terminus, the 269-residue chain is Glucosyl-3-phosphoglycerate/mannosyl-3-phosphoglycerate phosphatase (269 aa).

D6 functions as the Nucleophile in the catalytic mechanism. Residues D6, D8, and D210 each coordinate Mg(2+).

Belongs to the HAD-like hydrolase superfamily. MPGP family. In terms of assembly, monomer. It depends on Co(2+) as a cofactor. Mg(2+) is required as a cofactor.

It carries out the reaction (2R)-2-O-(alpha-D-glucopyranosyl)-3-phospho-glycerate + H2O = (2R)-2-O-(alpha-D-glucopyranosyl)-glycerate + phosphate. The catalysed reaction is 2-O-(alpha-D-mannosyl)-3-phosphoglycerate + H2O = (2R)-2-O-(alpha-D-mannosyl)-glycerate + phosphate. Involved in the biosynthesis of glucosylglycerate. Catalyzes the dephosphorylation of glucosyl-3-phosphoglycerate (GPG) and mannosyl-3-phosphoglycerate (MPG) to glucosylglycerate (GG) and mannosylglycerate (MG), respectively. The protein is Glucosyl-3-phosphoglycerate/mannosyl-3-phosphoglycerate phosphatase of Persephonella marina (strain DSM 14350 / EX-H1).